The primary structure comprises 147 residues: Transcriptional repressor NrdR (147 aa).

A zinc finger spans residues 3–34; the sequence is CLFCRSDDTKVIDSRTSEDGISIRRRRECQLC. The ATP-cone domain occupies 46 to 136; that stretch reads LTVIKRNGTS…VYQDFDSLED (91 aa).

Belongs to the NrdR family. The cofactor is Zn(2+).

Functionally, negatively regulates transcription of bacterial ribonucleotide reductase nrd genes and operons by binding to NrdR-boxes. In Tropheryma whipplei (strain TW08/27) (Whipple's bacillus), this protein is Transcriptional repressor NrdR.